Consider the following 538-residue polypeptide: Putative outer membrane porin BglH (538 aa).

An N-terminal signal peptide occupies residues 1–25 (MFRRNIITSAILLMAPLAFSAQSLA).

It belongs to the porin LamB (TC 1.B.3) family.

The protein localises to the cell outer membrane. In terms of biological role, may be a sugar porin with a broad carbohydrate specificity. In Escherichia coli O6:K15:H31 (strain 536 / UPEC), this protein is Putative outer membrane porin BglH (bglH).